Here is a 2856-residue protein sequence, read N- to C-terminus: Lipopolysaccharide-responsive and beige-like anchor protein (2856 aa).

2 disordered regions span residues 1–35 (MASE…ALSL) and 939–1107 (EQRK…DDDY). Ala2 carries the post-translational modification N-acetylalanine. Residues Ser10, Ser979, and Ser1003 each carry the phosphoserine modification. Positions 991 to 1009 (ENSSIGRASSIDSASNTEL) are enriched in polar residues. Over residues 1010–1026 (QTHDMSSDEKKVERENQ) the composition is skewed to basic and acidic residues. Residues 1073–1082 (SEVSASISSP) are compositionally biased toward low complexity. Phosphoserine is present on residues Ser1097, Ser1132, Ser1136, Ser1219, Ser1221, Ser1228, Ser1244, and Ser1258. The tract at residues 1253–1296 (FELKASTSTEAPQPQRHGLEISRQQEQTAQGTAPDAVDQQRRDS) is disordered. Over residues 1274 to 1283 (SRQQEQTAQG) the composition is skewed to polar residues. Residues 1298–1340 (STMFRIPEFKWSQMHQRLLTDLLFSIETDIQMWRSHSTKTVMD) form a WD 1 repeat. Phosphoserine occurs at positions 1487 and 1497. The helical transmembrane segment at 1529 to 1545 (AQFLALAVVYFISVLMV) threads the bilayer. Disordered stretches follow at residues 1556-1621 (DERH…LGSG) and 1750-1778 (SAVS…SPKC). The span at 1563-1573 (LKETSSDNGNA) shows a compositional bias: polar residues. The segment covering 1586–1601 (SSLTLSSVEESLEGTS) has biased composition (low complexity). A phosphoserine mark is found at Ser1608, Ser1770, Ser1773, and Ser2057. The 109-residue stretch at 2066-2174 (NLAGPVSLST…TVKKVVNYLP (109 aa)) folds into the BEACH-type PH domain. The BEACH domain occupies 2193–2482 (ATPRQLFKAS…QLLIEPHPPR (290 aa)). Ser2489 bears the Phosphoserine mark. WD repeat units follow at residues 2584 to 2626 (DQSI…LIQV), 2629 to 2672 (GHWD…SGIG), 2688 to 2728 (GHDY…RTLE), 2770 to 2809 (ETDD…QLFA), and 2812 to 2851 (GCDA…WHHE).

Interacts with TOM1 and TOLLIP. Isoform 1 is expressed in the brain, is absent from the lung and the bone marrow and is less abundant in the spleen. Isoform 2 is expressed in the spleen, lung, brain and bone marrow. Isoform 3 is expressed in the brain, is absent from the bone marrow and is less abundant in the spleen and lung.

Its subcellular location is the cell membrane. The protein resides in the endoplasmic reticulum membrane. It is found in the golgi apparatus. It localises to the trans-Golgi network membrane. The protein localises to the lysosome membrane. Involved in coupling signal transduction and vesicle trafficking to enable polarized secretion and/or membrane deposition of immune effector molecules. Involved in phagophore growth during mitophagy by regulating ATG9A trafficking to mitochondria. The sequence is that of Lipopolysaccharide-responsive and beige-like anchor protein (Lrba) from Mus musculus (Mouse).